The primary structure comprises 243 residues: 2-C-methyl-D-erythritol 4-phosphate cytidylyltransferase (243 aa).

It belongs to the IspD/TarI cytidylyltransferase family. IspD subfamily. As to quaternary structure, homodimer.

It carries out the reaction 2-C-methyl-D-erythritol 4-phosphate + CTP + H(+) = 4-CDP-2-C-methyl-D-erythritol + diphosphate. Its pathway is isoprenoid biosynthesis; isopentenyl diphosphate biosynthesis via DXP pathway; isopentenyl diphosphate from 1-deoxy-D-xylulose 5-phosphate: step 2/6. Its function is as follows. Catalyzes the formation of 4-diphosphocytidyl-2-C-methyl-D-erythritol from CTP and 2-C-methyl-D-erythritol 4-phosphate (MEP). The protein is 2-C-methyl-D-erythritol 4-phosphate cytidylyltransferase of Photorhabdus laumondii subsp. laumondii (strain DSM 15139 / CIP 105565 / TT01) (Photorhabdus luminescens subsp. laumondii).